The sequence spans 123 residues: Protein Wnt-3a (123 aa).

Serine 1 carries the O-palmitoleoyl serine lipid modification. A disulfide bridge connects residues cysteine 89 and cysteine 104. N-linked (GlcNAc...) asparagine glycosylation occurs at asparagine 90.

This sequence belongs to the Wnt family. Post-translationally, disulfide bonds have critical and distinct roles in secretion and activity. Loss of each conserved cysteine results in high molecular weight oxidized Wnt oligomers, which are formed through inter-Wnt disulfide bonding. In terms of processing, palmitoleoylation is required for efficient binding to frizzled receptors. Depalmitoleoylation leads to Wnt signaling pathway inhibition.

The protein localises to the secreted. The protein resides in the extracellular space. It is found in the extracellular matrix. Its function is as follows. Ligand for members of the frizzled family of seven transmembrane receptors. Functions in the canonical Wnt signaling pathway that results in activation of transcription factors of the TCF/LEF family. Required for normal embryonic mesoderm development and formation of caudal somites. Required for normal morphogenesis of the developing neural tube. The polypeptide is Protein Wnt-3a (WNT-3A) (Pituophis melanoleucus (Pine snake)).